Reading from the N-terminus, the 603-residue chain is Isovalerate--CoA ligase AAE2 (603 aa).

It belongs to the ATP-dependent AMP-binding enzyme family. As to expression, expressed at low levels in leaves, flowers and developing seeds.

The catalysed reaction is 3-methylbutanoate + ATP + CoA = 3-methylbutanoyl-CoA + AMP + diphosphate. It carries out the reaction hexanoate + ATP + CoA = hexanoyl-CoA + AMP + diphosphate. It catalyses the reaction butanoate + ATP + CoA = butanoyl-CoA + AMP + diphosphate. The enzyme catalyses pentanoate + ATP + CoA = pentanoyl-CoA + AMP + diphosphate. The catalysed reaction is 3-methylpentanoate + ATP + CoA = 3-methylpentanoyl-CoA + AMP + diphosphate. It carries out the reaction 4-methylpentanoate + ATP + CoA = 4-methylpentanoyl-CoA + AMP + diphosphate. Functionally, catalyzes the ligation of CoA on isovalerate to produce 3-methylbutanoyl-CoA. Can also use butanoate, pentanoate, hexanoate, 3-methylpentanoate and 4-methylpentanoate as substrates with a lower efficiency. The sequence is that of Isovalerate--CoA ligase AAE2 from Arabidopsis thaliana (Mouse-ear cress).